A 591-amino-acid polypeptide reads, in one-letter code: L-fucose isomerase (591 aa).

Catalysis depends on proton acceptor residues Glu337 and Asp361. Residues Glu337, Asp361, and His528 each coordinate Mn(2+).

Belongs to the L-fucose isomerase family. In terms of assembly, homohexamer. Mn(2+) is required as a cofactor.

The protein resides in the cytoplasm. The catalysed reaction is L-fucose = L-fuculose. The protein operates within carbohydrate degradation; L-fucose degradation; L-lactaldehyde and glycerone phosphate from L-fucose: step 1/3. Its function is as follows. Converts the aldose L-fucose into the corresponding ketose L-fuculose. This is L-fucose isomerase from Escherichia coli O139:H28 (strain E24377A / ETEC).